A 163-amino-acid chain; its full sequence is Putative pre-16S rRNA nuclease (163 aa).

Belongs to the YqgF nuclease family.

It is found in the cytoplasm. Could be a nuclease involved in processing of the 5'-end of pre-16S rRNA. This is Putative pre-16S rRNA nuclease from Roseobacter denitrificans (strain ATCC 33942 / OCh 114) (Erythrobacter sp. (strain OCh 114)).